The chain runs to 306 residues: Probable protein ABIL1 (306 aa).

The disordered stretch occupies residues 200-236 (KNSKTNGARQSEFVLEETKATKPASRGKEPSTSPLPK).

Belongs to the ABI family. Binds SCAR.

It localises to the cytoplasm. It is found in the cytoskeleton. Functionally, involved in regulation of actin and microtubule organization. Part of a WAVE complex that activates the Arp2/3 complex. The sequence is that of Probable protein ABIL1 from Oryza sativa subsp. japonica (Rice).